The chain runs to 111 residues: UPF0339 protein ACIAD0721 (111 aa).

Repeat copies occupy residues 10-58 and 61-109. Positions 89 to 111 are disordered; sequence SRDKGIESVKNNGTTATVKDLTG.

Belongs to the UPF0339 family. Duplicated subfamily.

The protein is UPF0339 protein ACIAD0721 of Acinetobacter baylyi (strain ATCC 33305 / BD413 / ADP1).